The sequence spans 339 residues: UDP-3-O-acylglucosamine N-acyltransferase (339 aa).

The active-site Proton acceptor is histidine 238.

The protein belongs to the transferase hexapeptide repeat family. LpxD subfamily. In terms of assembly, homotrimer.

It carries out the reaction a UDP-3-O-[(3R)-3-hydroxyacyl]-alpha-D-glucosamine + a (3R)-hydroxyacyl-[ACP] = a UDP-2-N,3-O-bis[(3R)-3-hydroxyacyl]-alpha-D-glucosamine + holo-[ACP] + H(+). It participates in bacterial outer membrane biogenesis; LPS lipid A biosynthesis. Catalyzes the N-acylation of UDP-3-O-acylglucosamine using 3-hydroxyacyl-ACP as the acyl donor. Is involved in the biosynthesis of lipid A, a phosphorylated glycolipid that anchors the lipopolysaccharide to the outer membrane of the cell. This Aeromonas hydrophila subsp. hydrophila (strain ATCC 7966 / DSM 30187 / BCRC 13018 / CCUG 14551 / JCM 1027 / KCTC 2358 / NCIMB 9240 / NCTC 8049) protein is UDP-3-O-acylglucosamine N-acyltransferase.